The chain runs to 442 residues: ATP-dependent protease ATPase subunit HslU (442 aa).

ATP-binding positions include isoleucine 18, 60-65, aspartate 255, glutamate 320, and arginine 392; that span reads GVGKTE.

The protein belongs to the ClpX chaperone family. HslU subfamily. In terms of assembly, a double ring-shaped homohexamer of HslV is capped on each side by a ring-shaped HslU homohexamer. The assembly of the HslU/HslV complex is dependent on binding of ATP.

It is found in the cytoplasm. In terms of biological role, ATPase subunit of a proteasome-like degradation complex; this subunit has chaperone activity. The binding of ATP and its subsequent hydrolysis by HslU are essential for unfolding of protein substrates subsequently hydrolyzed by HslV. HslU recognizes the N-terminal part of its protein substrates and unfolds these before they are guided to HslV for hydrolysis. This Aeromonas hydrophila subsp. hydrophila (strain ATCC 7966 / DSM 30187 / BCRC 13018 / CCUG 14551 / JCM 1027 / KCTC 2358 / NCIMB 9240 / NCTC 8049) protein is ATP-dependent protease ATPase subunit HslU.